The chain runs to 317 residues: MTTQLDALRNMTVVVADTGDIEAIKKYQPQDATTNPSLILSASALPQYASLIDDAINYAKAKSTDKAQQLIDAEDKLAVNIGLEILKIVPGRISTEVDARLSYDTAATVEKARKLIKLYNEAGINNDRILIKVASTWQGIRAAEILEKEGINCNLTLLFSQAQARACAEAGVYLISPFVGRILDWYKANTDKKEYVPNEDPGVISVTSIYNYYKQYGYQTVVMGASFRNIGEITELAGCDRLTIAPALLKELQESNADLPRKLDYKGEVKPKPAPLTESQFYWEHNNDPMAVDKLAEGIRKFAADIEKLEAMLSTKL.

Lys132 serves as the catalytic Schiff-base intermediate with substrate.

This sequence belongs to the transaldolase family. Type 1 subfamily. Homodimer.

Its subcellular location is the cytoplasm. The catalysed reaction is D-sedoheptulose 7-phosphate + D-glyceraldehyde 3-phosphate = D-erythrose 4-phosphate + beta-D-fructose 6-phosphate. Its pathway is carbohydrate degradation; pentose phosphate pathway; D-glyceraldehyde 3-phosphate and beta-D-fructose 6-phosphate from D-ribose 5-phosphate and D-xylulose 5-phosphate (non-oxidative stage): step 2/3. In terms of biological role, transaldolase is important for the balance of metabolites in the pentose-phosphate pathway. The polypeptide is Transaldolase (Mannheimia succiniciproducens (strain KCTC 0769BP / MBEL55E)).